The primary structure comprises 145 residues: Basic phospholipase A2 GL1-1 (145 aa).

The signal sequence occupies residues 1–21; the sequence is MYPAHLLVLLAVCVSLLGASA. The propeptide occupies 22–27; sequence IPPLPL. Cystine bridges form between C38-C98, C54-C144, C56-C72, C71-C125, C78-C118, C87-C111, and C105-C116. Y55, G57, and G59 together coordinate Ca(2+). The active site involves H75. D76 is a binding site for Ca(2+). D119 is an active-site residue.

Belongs to the phospholipase A2 family. Group I subfamily. D49 sub-subfamily. Requires Ca(2+) as cofactor. Expressed by the venom gland.

It is found in the secreted. It carries out the reaction a 1,2-diacyl-sn-glycero-3-phosphocholine + H2O = a 1-acyl-sn-glycero-3-phosphocholine + a fatty acid + H(+). Its function is as follows. PLA2 catalyzes the calcium-dependent hydrolysis of the 2-acyl groups in 3-sn-phosphoglycerides. This Laticauda semifasciata (Black-banded sea krait) protein is Basic phospholipase A2 GL1-1.